A 548-amino-acid chain; its full sequence is Myrosinase (548 aa).

Residues 1–20 (MKLLHGLALVFLLAAASCKA) form the signal peptide. 3 cysteine pairs are disulfide-bonded: C26–C458, C34–C454, and C226–C236. Substrate is bound at residue Q59. Residues H76 and D90 each coordinate Zn(2+). The N-linked (GlcNAc...) asparagine glycan is linked to N110. H161 and N206 together coordinate substrate. An L-ascorbate-binding site is contributed by Q207. A glycan (N-linked (GlcNAc...) asparagine) is linked at N240. R281 provides a ligand contact to L-ascorbate. An N-linked (GlcNAc...) asparagine glycan is attached at N331. Y352 lines the substrate pocket. Catalysis depends on E429, which acts as the Nucleophile. Residues W477 and 484–485 (EF) each bind substrate. A glycan (N-linked (GlcNAc...) asparagine) is linked at N520.

Belongs to the glycosyl hydrolase 1 family. In terms of assembly, homodimer. In terms of tissue distribution, in vacuoles called myrosin grains of a certain class of cells, myrosin cells, distributed in the cotyledons and the axis of the embryo as well as in different organs of the growing plant.

The protein localises to the vacuole. The enzyme catalyses a thioglucoside + H2O = a sugar + a thiol.. In terms of biological role, degradation of glucosinolates (glucose residue linked by a thioglucoside bound to an amino acid derivative) to glucose, sulfate and any of the products: thiocyanates, isothiocyanates, nitriles, epithionitriles or oxazolidine-2-thiones. This is Myrosinase from Brassica napus (Rape).